A 499-amino-acid polypeptide reads, in one-letter code: MRLPYRNKKVTLWVLFGIIVITMFLFKFTELRPTCLFKVDAANELSSQMVRVEKYLTDDNQRVYSYNREMPLIFIGGVPRSGTTLMRAMLDAHPDVRCGQETRVIPRILQLRSHWLKSEKESLRLQEAGITKEVMNSAIAQFCLEIIAKHGEPAPRLCNKDPLTLKMGSYVIELFPNAKFLFMVRDGRATVHSIISRKVTITGFDLSSYRQCMQKWNHAIEVMHEQCRDIGKDRCMMVYYEQLVLHPEEWMRKILKFLDVPWNDAVLHHEEFINKPNGVPLSKVERSSDQVIKPVNLEAMSKWVGQIPGDVVRDMADIAPMLSVLGYDPYANPPDYGKPDAWVQDNTSKLKANRMLWESKAKQVLQMSSSEDDNTNTIINNSNNKDNNNNQYTINKIIPEQHSRQRQHVQQQHLQQQQQQHLQQQQHQRQQQQQQREEESESEREAEPDREQQLLHQKPKDVITIKQLPLAGSNNNNINNNINNNNNNNNIMEDPMADT.

Topologically, residues 1–9 (MRLPYRNKK) are cytoplasmic. The helical; Signal-anchor for type II membrane protein transmembrane segment at 10–30 (VTLWVLFGIIVITMFLFKFTE) threads the bilayer. Over 31–499 (LRPTCLFKVD…NIMEDPMADT (469 aa)) the chain is Lumenal. 80-84 (RSGTT) lines the 3'-phosphoadenylyl sulfate pocket. Residues cysteine 98 and cysteine 158 are joined by a disulfide bond. The Proton donor/acceptor role is filled by glutamate 101. An interaction with peptide substrate region spans residues 103–107 (RVIPR). 3 residues coordinate 3'-phosphoadenylyl sulfate: arginine 185, serine 193, and arginine 197. The cysteines at positions 227 and 235 are disulfide-linked. 3'-phosphoadenylyl sulfate contacts are provided by residues tyrosine 240, 287–296 (SSDQVIKPVN), and lysine 302. N-linked (GlcNAc...) asparagine glycosylation is found at asparagine 346 and asparagine 380. Disordered regions lie at residues 362–460 (KQVL…QKPK) and 476–499 (NNINNNINNNNNNNNIMEDPMADT). Low complexity-rich tracts occupy residues 375 to 400 (TNTIINNSNNKDNNNNQYTINKIIPE) and 408 to 434 (HVQQQHLQQQQQQHLQQQQHQRQQQQQ). The span at 443-460 (EREAEPDREQQLLHQKPK) shows a compositional bias: basic and acidic residues. Residues 476–491 (NNINNNINNNNNNNNI) show a composition bias toward low complexity.

It belongs to the protein sulfotransferase family.

The protein localises to the golgi apparatus membrane. The catalysed reaction is L-tyrosyl-[protein] + 3'-phosphoadenylyl sulfate = O-sulfo-L-tyrosine-[protein] + adenosine 3',5'-bisphosphate + H(+). In terms of biological role, catalyzes the O-sulfation of tyrosine residues within acidic motifs of polypeptides. Has a role in protein secretion. This chain is Protein-tyrosine sulfotransferase, found in Drosophila melanogaster (Fruit fly).